A 180-amino-acid polypeptide reads, in one-letter code: Napin (180 aa).

The first 21 residues, M1–A21, serve as a signal peptide directing secretion. 2 consecutive propeptides follow at residues S22–P38 and P75–G94.

It belongs to the 2S seed storage albumins family. The mature protein consists of a small and a large chain linked by disulfide bonds. As to expression, cotyledons and the axis.

Its function is as follows. The small, basic, water-soluble napins are one of the two major kinds of storage proteins synthesized in the seed during its maturation. This Brassica napus (Rape) protein is Napin (NAP1).